The primary structure comprises 331 residues: Glycerol-3-phosphate dehydrogenase [NAD(P)+] (331 aa).

NADPH-binding residues include Trp14, Arg34, and Lys107. Residues Lys107, Gly135, and Ser137 each coordinate sn-glycerol 3-phosphate. Residue Ala139 participates in NADPH binding. Lys190, Asp243, Ser253, Arg254, and Asn255 together coordinate sn-glycerol 3-phosphate. The Proton acceptor role is filled by Lys190. Arg254 is an NADPH binding site. NADPH-binding residues include Val278 and Glu280.

The protein belongs to the NAD-dependent glycerol-3-phosphate dehydrogenase family.

It is found in the cytoplasm. The enzyme catalyses sn-glycerol 3-phosphate + NAD(+) = dihydroxyacetone phosphate + NADH + H(+). The catalysed reaction is sn-glycerol 3-phosphate + NADP(+) = dihydroxyacetone phosphate + NADPH + H(+). The protein operates within membrane lipid metabolism; glycerophospholipid metabolism. In terms of biological role, catalyzes the reduction of the glycolytic intermediate dihydroxyacetone phosphate (DHAP) to sn-glycerol 3-phosphate (G3P), the key precursor for phospholipid synthesis. The sequence is that of Glycerol-3-phosphate dehydrogenase [NAD(P)+] from Caulobacter vibrioides (strain ATCC 19089 / CIP 103742 / CB 15) (Caulobacter crescentus).